Consider the following 141-residue polypeptide: HTH-type transcriptional regulator MntR (141 aa).

The 63-residue stretch at 1–63 (MPTPSMEDYI…YEKYRGLVLT (63 aa)) folds into the HTH dtxR-type domain. Mn(2+)-binding residues include Asp-8, Glu-11, His-77, Glu-99, Glu-102, and His-103.

The protein belongs to the DtxR/MntR family. Homodimer.

Its subcellular location is the cytoplasm. Its activity is regulated as follows. DNA binding is strongly activated by Mn(2+). Functionally, central regulator of manganese homeostasis. This is HTH-type transcriptional regulator MntR from Geobacillus thermodenitrificans (strain NG80-2).